Reading from the N-terminus, the 2592-residue chain is 6-hydroxymellein synthase cdmE (2592 aa).

The span at 1 to 11 (MVLHPSDRRFP) shows a compositional bias: basic and acidic residues. The segment at 1–25 (MVLHPSDRRFPETNGVGGHSKDSSA) is disordered. A Ketosynthase family 3 (KS3) domain is found at 32-456 (LEPLAIVGFA…GTNAHVVLES (425 aa)). Residues C205, H340, and H379 each act as for beta-ketoacyl synthase activity in the active site. Residues 589–910 (VFTGQGAQWP…RYSHTITRKK (322 aa)) are malonyl-CoA:ACP transacylase (MAT) domain. The segment at 978–1113 (HELLGSPDPD…GFIESKCESD (136 aa)) is N-terminal hotdog fold. Positions 978–1291 (HELLGSPDPD…IRGTELCLLS (314 aa)) are dehydratase (DH) domain. The PKS/mFAS DH domain maps to 978–1296 (HELLGSPDPD…LCLLSAGRGD (319 aa)). The interval 1140–1296 (TQIGSISAFY…LCLLSAGRGD (157 aa)) is C-terminal hotdog fold. I1462 and E1484 together coordinate S-adenosyl-L-methionine. Residues 1483-1591 (LEIGTGFGSV…HSLLKPGGKL (109 aa)) form a methyltransferase (CMeT) domain region. The tract at residues 1887 to 2199 (GLLVWSDDEA…NDSNMDTAVI (313 aa)) is enoyl reductase (ER) domain. The ketoreductase (KR) domain stretch occupies residues 2223 to 2398 (ATYVIAGGLG…IPGMSVNLGN (176 aa)). Positions 2509 to 2586 (VAASHVTEAI…GLSEKIARQS (78 aa)) constitute a Carrier domain. The residue at position 2546 (S2546) is an O-(pantetheine 4'-phosphoryl)serine.

It carries out the reaction 5 malonyl-CoA + AH2 + 5 H(+) = 6-hydroxymellein + A + 5 CO2 + 5 CoA + H2O. The protein operates within secondary metabolite biosynthesis; terpenoid biosynthesis. Functionally, highly reducing polyketide synthase; part of the gene cluster that mediates the biosynthesis of chrodrimanin B, a meroterpenoid that acts as a potent blocker of insect GABA-gated chloride channels. The first step of the pathway is the biosynthesis of 6-hydroxymellein by the polyketide synthase cdmE. The prenyltransferase cdmH acts as a 6-hydroxymellein 5-farnesyltransferase and produces the hydrophobic metabolite verruculide C. The FAD-dependent monooxygenase cdmI further converts verruculide C into verruculide B. The terpene cyclase cdmG then produced the pentacyclic molecule 3-hydroxypentacecilide A, the backbone structure of chrodrimanin B, via folding the farnesyl moiety of the substrate into the chair-boat conformation. The short-chain dehydrogenase/reductase cdmF functions as the 3-OH dehydrogenase that oxidizes the C-3 hydroxyl group of 3-hydroxypentacecilide A and produces chrodrimanin C, the dehydrogenated product of 3-hydroxypentacecilide A. The cytochrome P450 monooxygenase cdmJ then accepts both 3-hydroxypentacecilide A and chrodrimanin C and functions as a C-7-beta-hydroxylase to produce respectively chrodrimanin H and chrodrimanin F. The dioxygenase cdmA accepts chrodrimanin H to afford chrodrimanin E, which is further transformed to chrodrimanin A by the dioxygenase cdmD. CdmA can also accept chrodrimanin C as substrate to convert it into verruculide A, which is further converted into chrodrimanin T by cdmD. The last step of the biosynthesis is proposed to be performed by the acetyltransferase cdmC which acetylates chrodrimanin A to yield chrodrimanin B. The pathway may also lead to the production of additional shunt products, including chrodrimanins T and U. This Talaromyces verruculosus (Penicillium verruculosum) protein is 6-hydroxymellein synthase cdmE.